The primary structure comprises 901 residues: HTH-type transcriptional regulator MalT (901 aa).

39 to 46 provides a ligand contact to ATP; the sequence is SPAGYGKT. The HTH luxR-type domain maps to 829–894; the sequence is ELIRTSPLTQ…DAVQHAQQLL (66 aa). Residues 853–872 constitute a DNA-binding region (H-T-H motif); that stretch reads NEQIAGELAVAATTIKTHIR.

Belongs to the MalT family. Monomer in solution. Oligomerizes to an active state in the presence of the positive effectors ATP and maltotriose.

With respect to regulation, activated by ATP and maltotriose, which are both required for DNA binding. Functionally, positively regulates the transcription of the maltose regulon whose gene products are responsible for uptake and catabolism of malto-oligosaccharides. Specifically binds to the promoter region of its target genes, recognizing a short DNA motif called the MalT box. The protein is HTH-type transcriptional regulator MalT of Salmonella agona (strain SL483).